A 475-amino-acid chain; its full sequence is L-seryl-tRNA(Sec) selenium transferase (475 aa).

Lys-295 is subject to N6-(pyridoxal phosphate)lysine.

Belongs to the SelA family. It depends on pyridoxal 5'-phosphate as a cofactor.

The protein localises to the cytoplasm. It catalyses the reaction L-seryl-tRNA(Sec) + selenophosphate + H(+) = L-selenocysteinyl-tRNA(Sec) + phosphate. The protein operates within aminoacyl-tRNA biosynthesis; selenocysteinyl-tRNA(Sec) biosynthesis; selenocysteinyl-tRNA(Sec) from L-seryl-tRNA(Sec) (bacterial route): step 1/1. Functionally, converts seryl-tRNA(Sec) to selenocysteinyl-tRNA(Sec) required for selenoprotein biosynthesis. The sequence is that of L-seryl-tRNA(Sec) selenium transferase from Desulfovibrio desulfuricans (strain ATCC 27774 / DSM 6949 / MB).